A 149-amino-acid chain; its full sequence is Small ribosomal subunit protein uS9 (149 aa).

The protein belongs to the universal ribosomal protein uS9 family.

Its subcellular location is the cytoplasm. The sequence is that of Small ribosomal subunit protein uS9 (RPS16A) from Oryza sativa subsp. indica (Rice).